The chain runs to 89 residues: Protein YxiC (89 aa).

In Bacillus subtilis (strain 168), this protein is Protein YxiC (yxiC).